The sequence spans 171 residues: Peptidyl-prolyl cis-trans isomerase (171 aa).

Residues F7–Q170 enclose the PPIase cyclophilin-type domain.

It belongs to the cyclophilin-type PPIase family. Expressed in leaves, floral buds, growing shoots and stamens at anthesis.

The protein resides in the cytoplasm. It catalyses the reaction [protein]-peptidylproline (omega=180) = [protein]-peptidylproline (omega=0). Binds cyclosporin A (CsA). CsA mediates some of its effects via an inhibitory action on PPIase. PPIases accelerate the folding of proteins. It catalyzes the cis-trans isomerization of proline imidic peptide bonds in oligopeptides. The protein is Peptidyl-prolyl cis-trans isomerase of Solanum lycopersicum (Tomato).